A 152-amino-acid chain; its full sequence is Xanthine-guanine phosphoribosyltransferase (152 aa).

Residues 37-38 (RG), arginine 69, and 88-96 (DDLVDTGGT) contribute to the 5-phospho-alpha-D-ribose 1-diphosphate site. A GMP-binding site is contributed by arginine 69. Mg(2+) is bound at residue aspartate 89. Guanine-binding residues include aspartate 92 and isoleucine 135. Aspartate 92 and isoleucine 135 together coordinate xanthine. Residues 92-96 (DTGGT) and 134-135 (WI) contribute to the GMP site.

It belongs to the purine/pyrimidine phosphoribosyltransferase family. XGPT subfamily. Homotetramer. Mg(2+) is required as a cofactor.

It is found in the cell inner membrane. The enzyme catalyses GMP + diphosphate = guanine + 5-phospho-alpha-D-ribose 1-diphosphate. The catalysed reaction is XMP + diphosphate = xanthine + 5-phospho-alpha-D-ribose 1-diphosphate. It carries out the reaction IMP + diphosphate = hypoxanthine + 5-phospho-alpha-D-ribose 1-diphosphate. Its pathway is purine metabolism; GMP biosynthesis via salvage pathway; GMP from guanine: step 1/1. It functions in the pathway purine metabolism; XMP biosynthesis via salvage pathway; XMP from xanthine: step 1/1. Its function is as follows. Purine salvage pathway enzyme that catalyzes the transfer of the ribosyl-5-phosphate group from 5-phospho-alpha-D-ribose 1-diphosphate (PRPP) to the N9 position of the 6-oxopurines guanine and xanthine to form the corresponding ribonucleotides GMP (guanosine 5'-monophosphate) and XMP (xanthosine 5'-monophosphate), with the release of PPi. To a lesser extent, also acts on hypoxanthine. This is Xanthine-guanine phosphoribosyltransferase from Edwardsiella ictaluri (strain 93-146).